The following is a 318-amino-acid chain: Porphobilinogen deaminase (318 aa).

At Cys-245 the chain carries S-(dipyrrolylmethanemethyl)cysteine.

The protein belongs to the HMBS family. In terms of assembly, monomer. The cofactor is dipyrromethane.

The enzyme catalyses 4 porphobilinogen + H2O = hydroxymethylbilane + 4 NH4(+). It functions in the pathway porphyrin-containing compound metabolism; protoporphyrin-IX biosynthesis; coproporphyrinogen-III from 5-aminolevulinate: step 2/4. The protein operates within porphyrin-containing compound metabolism; chlorophyll biosynthesis. Functionally, tetrapolymerization of the monopyrrole PBG into the hydroxymethylbilane pre-uroporphyrinogen in several discrete steps. The sequence is that of Porphobilinogen deaminase from Prochlorococcus marinus (strain MIT 9215).